The chain runs to 339 residues: Cyclin-Y-like protein 1-A (339 aa).

Residues Met-1–Ser-13 show a composition bias toward polar residues. The disordered stretch occupies residues Met-1–Gln-42. Residues Ser-14–Thr-24 show a composition bias toward basic and acidic residues. Residues Asp-141–Asn-263 enclose the Cyclin N-terminal domain.

It belongs to the cyclin family. Cyclin Y subfamily.

The sequence is that of Cyclin-Y-like protein 1-A (ccnyl1-a) from Xenopus laevis (African clawed frog).